The chain runs to 327 residues: Methionine import ATP-binding protein MetN (327 aa).

Residues 3 to 239 (VELKNIEKIY…PKHAVTKELI (237 aa)) enclose the ABC transporter domain. 36 to 43 (GYSGAGKS) is an ATP binding site.

It belongs to the ABC transporter superfamily. Methionine importer (TC 3.A.1.24) family. The complex is composed of two ATP-binding proteins (MetN), two transmembrane proteins (MetI) and a solute-binding protein (MetQ).

The protein localises to the cell inner membrane. The enzyme catalyses L-methionine(out) + ATP + H2O = L-methionine(in) + ADP + phosphate + H(+). The catalysed reaction is D-methionine(out) + ATP + H2O = D-methionine(in) + ADP + phosphate + H(+). In terms of biological role, part of the ABC transporter complex MetNIQ involved in methionine import. Responsible for energy coupling to the transport system. The chain is Methionine import ATP-binding protein MetN from Helicobacter acinonychis (strain Sheeba).